Reading from the N-terminus, the 225-residue chain is Cytidylate kinase (225 aa).

12–20 (GPSGAGKGT) is an ATP binding site.

This sequence belongs to the cytidylate kinase family. Type 1 subfamily.

It localises to the cytoplasm. It catalyses the reaction CMP + ATP = CDP + ADP. It carries out the reaction dCMP + ATP = dCDP + ADP. In Stenotrophomonas maltophilia (strain R551-3), this protein is Cytidylate kinase.